A 205-amino-acid polypeptide reads, in one-letter code: N-(5'-phosphoribosyl)anthranilate isomerase (205 aa).

This sequence belongs to the TrpF family.

The enzyme catalyses N-(5-phospho-beta-D-ribosyl)anthranilate = 1-(2-carboxyphenylamino)-1-deoxy-D-ribulose 5-phosphate. It functions in the pathway amino-acid biosynthesis; L-tryptophan biosynthesis; L-tryptophan from chorismate: step 3/5. This Thermotoga neapolitana (strain ATCC 49049 / DSM 4359 / NBRC 107923 / NS-E) protein is N-(5'-phosphoribosyl)anthranilate isomerase.